The sequence spans 304 residues: Protein ML (304 aa).

In terms of biological role, blocks host IRF3 and IRF7, thereby inhibiting IFN-beta expression and activation of host antiviral state. This Thogoto virus (isolate SiAr 126) (Tho) protein is Protein ML.